The primary structure comprises 607 residues: Monocarboxylate transporter 7 (607 aa).

The disordered stretch occupies residues 1–84 (MRASGQGPQR…PAETGCSRSR (84 aa)). Topologically, residues 1 to 105 (MRASGQGPQR…ANVYTQVPDG (105 aa)) are cytoplasmic. The chain crosses the membrane as a helical span at residues 106–126 (GWGWAVAVSFFFVEVFTYGII). Over 127–146 (KSFGVFFNDLMDSFDESNSK) the chain is Extracellular. The helical transmembrane segment at 147 to 167 (ISWIISICVFVLTFTAPLSTV) threads the bilayer. Over 168–175 (LSNRFGHR) the chain is Cytoplasmic. The chain crosses the membrane as a helical span at residues 176 to 196 (LVVMAGGLLISLGMITASFSQ). Over 197–202 (RVYHMY) the chain is Extracellular. A helical membrane pass occupies residues 203–223 (ISIGVISGLGYCFSFLPTVTI). Topologically, residues 224-233 (LSQYFDKRRS) are cytoplasmic. A helical transmembrane segment spans residues 234–254 (VVTAVASTGECFAVFAFAPAI). At 255 to 268 (TALKEHIGWRYSLL) the chain is on the extracellular side. A helical membrane pass occupies residues 269–289 (FVGLLQLNIMVCGALLRPIII). Residues 290 to 383 (QGPGQSPKAV…KEKSFICYAL (94 aa)) lie on the Cytoplasmic side of the membrane. 4 positions are modified to phosphoserine: Ser319, Ser322, Ser325, and Ser332. A helical transmembrane segment spans residues 384-404 (FGLFATLGFFAPSLYIIPLGI). Over 405-414 (SLGIDPDRAA) the chain is Extracellular. The chain crosses the membrane as a helical span at residues 415–435 (FLLSTMAIAEVFGRIGAGFVL). Residues 436–442 (NREPIRK) are Cytoplasmic-facing. Residues 443–463 (IYIELICVILLTASLFAFTFA) traverse the membrane as a helical segment. The Extracellular portion of the chain corresponds to 464-465 (TE). A helical membrane pass occupies residues 466 to 486 (FWGLMLCSVFFGSMVGTIGGT). The Cytoplasmic segment spans residues 487–507 (HIPMLAEDDVVGIEKMSSAAG). The helical transmembrane segment at 508 to 528 (VYVFIQSISGLAGPPLAGLLV) threads the bilayer. At 529-536 (DQSKIYSR) the chain is on the extracellular side. A helical transmembrane segment spans residues 537-557 (AFYSCAAGMCLAAVCLALVRP). Residues 558–607 (CKKGLCQNSHSGENQTDRQRGKALQDIPEDFLEMDLGKCEHRAHMKMDPV) lie on the Cytoplasmic side of the membrane.

This sequence belongs to the major facilitator superfamily. Monocarboxylate porter (TC 2.A.1.13) family. As to quaternary structure, forms functional complexes with BSG/CD147 or EMB/GP70 ancillary proteins.

The protein resides in the basolateral cell membrane. It carries out the reaction taurine(out) = taurine(in). Functionally, monocarboxylate transporter selective for taurine. May associate with BSG/CD147 or EMB/GP70 ancillary proteins to mediate facilitative efflux or influx of taurine across the plasma membrane. The transport is pH- and sodium-independent. Rather low-affinity, is likely effective for taurine transport in tissues where taurine is present at high concentrations. In Mus musculus (Mouse), this protein is Monocarboxylate transporter 7.